A 161-amino-acid polypeptide reads, in one-letter code: MKIRGRALVYGDKIDTDVIIPAKYLVYTDPALLGQHAMEPLDPEFPKKAKGAVLVAGRAFGMGSSREQAALALKGAGVLAVVAESFARIFFRNAINVGLPVLQAPGIREKVKDGDEVELDVEGGIVRNITTGEVIVGKPLRGLPLEILKAGGLLNYLKNSR.

This sequence belongs to the LeuD family. LeuD type 2 subfamily. Heterodimer of LeuC and LeuD.

It catalyses the reaction (2R,3S)-3-isopropylmalate = (2S)-2-isopropylmalate. Its pathway is amino-acid biosynthesis; L-leucine biosynthesis; L-leucine from 3-methyl-2-oxobutanoate: step 2/4. Its function is as follows. Catalyzes the isomerization between 2-isopropylmalate and 3-isopropylmalate, via the formation of 2-isopropylmaleate. This is 3-isopropylmalate dehydratase small subunit (leuD) from Pyrobaculum aerophilum (strain ATCC 51768 / DSM 7523 / JCM 9630 / CIP 104966 / NBRC 100827 / IM2).